We begin with the raw amino-acid sequence, 363 residues long: Small ribosomal subunit biogenesis GTPase RsgA (363 aa).

Positions H112–L268 constitute a CP-type G domain. Residues T157–D160 and G210–T218 each bind GTP. C291, C296, H298, and C304 together coordinate Zn(2+). Positions R340–H363 are disordered.

The protein belongs to the TRAFAC class YlqF/YawG GTPase family. RsgA subfamily. As to quaternary structure, monomer. Associates with 30S ribosomal subunit, binds 16S rRNA. The cofactor is Zn(2+).

It is found in the cytoplasm. Its function is as follows. One of several proteins that assist in the late maturation steps of the functional core of the 30S ribosomal subunit. Helps release RbfA from mature subunits. May play a role in the assembly of ribosomal proteins into the subunit. Circularly permuted GTPase that catalyzes slow GTP hydrolysis, GTPase activity is stimulated by the 30S ribosomal subunit. In Xanthomonas axonopodis pv. citri (strain 306), this protein is Small ribosomal subunit biogenesis GTPase RsgA.